The sequence spans 128 residues: Flagellar assembly factor FliW 1 (128 aa).

The protein belongs to the FliW family. Interacts with translational regulator CsrA and flagellin(s).

The protein resides in the cytoplasm. Its function is as follows. Acts as an anti-CsrA protein, binds CsrA and prevents it from repressing translation of its target genes, one of which is flagellin. Binds to flagellin and participates in the assembly of the flagellum. This chain is Flagellar assembly factor FliW 1, found in Wolinella succinogenes (strain ATCC 29543 / DSM 1740 / CCUG 13145 / JCM 31913 / LMG 7466 / NCTC 11488 / FDC 602W) (Vibrio succinogenes).